Here is a 111-residue protein sequence, read N- to C-terminus: Aspartate 1-decarboxylase (111 aa).

Serine 25 serves as the catalytic Schiff-base intermediate with substrate; via pyruvic acid. Position 25 is a pyruvic acid (Ser) (serine 25). Residue threonine 57 participates in substrate binding. Tyrosine 58 acts as the Proton donor in catalysis. Residue 73 to 75 (GPA) participates in substrate binding.

Belongs to the PanD family. Heterooctamer of four alpha and four beta subunits. It depends on pyruvate as a cofactor. In terms of processing, is synthesized initially as an inactive proenzyme, which is activated by self-cleavage at a specific serine bond to produce a beta-subunit with a hydroxyl group at its C-terminus and an alpha-subunit with a pyruvoyl group at its N-terminus.

It is found in the cytoplasm. The catalysed reaction is L-aspartate + H(+) = beta-alanine + CO2. It functions in the pathway cofactor biosynthesis; (R)-pantothenate biosynthesis; beta-alanine from L-aspartate: step 1/1. Functionally, catalyzes the pyruvoyl-dependent decarboxylation of aspartate to produce beta-alanine. This chain is Aspartate 1-decarboxylase, found in Francisella tularensis subsp. novicida (strain U112).